A 91-amino-acid chain; its full sequence is Small ribosomal subunit protein uS19 (91 aa).

This sequence belongs to the universal ribosomal protein uS19 family.

Its function is as follows. Protein S19 forms a complex with S13 that binds strongly to the 16S ribosomal RNA. The protein is Small ribosomal subunit protein uS19 of Leptothrix cholodnii (strain ATCC 51168 / LMG 8142 / SP-6) (Leptothrix discophora (strain SP-6)).